We begin with the raw amino-acid sequence, 43 residues long: Cytochrome b559 subunit beta (43 aa).

A helical membrane pass occupies residues 18–34 (WLAVHTLAIPTVFFLGA). Histidine 22 lines the heme pocket.

This sequence belongs to the PsbE/PsbF family. Heterodimer of an alpha subunit and a beta subunit. PSII is composed of 1 copy each of membrane proteins PsbA, PsbB, PsbC, PsbD, PsbE, PsbF, PsbH, PsbI, PsbJ, PsbK, PsbL, PsbM, PsbT, PsbX, PsbY, PsbZ, Psb30/Ycf12, peripheral proteins PsbO, CyanoQ (PsbQ), PsbU, PsbV and a large number of cofactors. It forms dimeric complexes. Heme b is required as a cofactor.

The protein localises to the cellular thylakoid membrane. In terms of biological role, this b-type cytochrome is tightly associated with the reaction center of photosystem II (PSII). PSII is a light-driven water:plastoquinone oxidoreductase that uses light energy to abstract electrons from H(2)O, generating O(2) and a proton gradient subsequently used for ATP formation. It consists of a core antenna complex that captures photons, and an electron transfer chain that converts photonic excitation into a charge separation. In Synechococcus sp. (strain JA-2-3B'a(2-13)) (Cyanobacteria bacterium Yellowstone B-Prime), this protein is Cytochrome b559 subunit beta.